Reading from the N-terminus, the 810-residue chain is Hemoglobin-haptoglobin utilization protein B (810 aa).

The signal sequence occupies residues 1–22; the sequence is MPIPFKPVLAVAAIAQAFPAFA. In terms of domain architecture, TBDR plug spans 34-166; sequence NEITVTGTHK…LGGAVNYQTK (133 aa). Residues 175-810 form the TBDR beta-barrel domain; sequence DKPYHLGIKG…SYNFTIEAKF (636 aa). Residues 793-810 carry the TonB C-terminal box motif; it reads QRFTSPGRSYNFTIEAKF.

This sequence belongs to the TonB-dependent receptor family.

The protein localises to the cell outer membrane. In terms of biological role, acts as a receptor for hemoglobin or the hemoglobin/haptoglobin complex and is required for heme uptake. The protein is Hemoglobin-haptoglobin utilization protein B (hpuB) of Neisseria meningitidis serogroup C.